Reading from the N-terminus, the 145-residue chain is Large ribosomal subunit protein uL11 (145 aa).

The protein belongs to the universal ribosomal protein uL11 family. Part of the ribosomal stalk of the 50S ribosomal subunit. Interacts with L10 and the large rRNA to form the base of the stalk. L10 forms an elongated spine to which L12 dimers bind in a sequential fashion forming a multimeric L10(L12)X complex. Post-translationally, one or more lysine residues are methylated.

In terms of biological role, forms part of the ribosomal stalk which helps the ribosome interact with GTP-bound translation factors. This Rickettsia prowazekii (strain Madrid E) protein is Large ribosomal subunit protein uL11.